Here is a 340-residue protein sequence, read N- to C-terminus: Guanine nucleotide-binding protein subunit beta-1 (340 aa).

7 WD repeats span residues 53–83 (GHLAKIYAMHWASDSRNLVSASQDGKLIVWD), 95–125 (LRSSWVMTCAYAPSGSFVACGGLDNICSIYS), 141–170 (GHTGYLSCCRFLDDNQIVTSSGDMTCALWD), 182–212 (GHTGDVMSLSLSPDFRTFISGACDASAKLWD), 224–254 (GHESDINAVAFFPSGNAFATGSDDATCRLFD), 268–298 (NIICGITSVAFSKSGRLLFAGYDDFNCNVWD), and 310–340 (GHDNRVSCLGVTEDGMAVCTGSWDSFLKIWN).

It belongs to the WD repeat G protein beta family. In terms of assembly, g proteins are composed of 3 units, alpha, beta and gamma. Interacts with G protein gamma subunits gpc-1 and gpc-2 and with egl-10 and eat-16. Interacts with goa-1 (in GDP-bound form).

Its function is as follows. Guanine nucleotide-binding proteins (G proteins) are involved as a modulator or transducer in various transmembrane signaling systems. The beta and gamma chains are required for the GTPase activity, for replacement of GDP by GTP, and for G protein-effector interaction. In the early embryo, controls the magnitude of the forces acting on centrosomes but is not required for generating asymmetric forces. In Caenorhabditis briggsae, this protein is Guanine nucleotide-binding protein subunit beta-1 (gpb-1).